A 425-amino-acid polypeptide reads, in one-letter code: Histone-binding protein RBBP4 (425 aa).

Residue alanine 2 is modified to N-acetylalanine. WD repeat units lie at residues 32–125, 126–175, 176–223, 225–270, 271–314, 315–371, and 372–404; these read YDLV…NHEG, EVNR…RLRG, HQKE…KTIF, GHTA…HSVD, AHTA…HSFE, SHKD…FIHG, and GHTA…VWQM.

Belongs to the WD repeat RBAP46/RBAP48/MSI1 family. As to quaternary structure, binds directly to histone H4, probably via helix 1 of the histone fold, a region that is not accessible when histone H4 is in chromatin. Forms a large corepressor complex that contains ncor1, sin3a and possibly sin3b, histone deacetylases hdac2, hdac1, rbbp4 and possibly rbbp7.

The protein localises to the nucleus. Its subcellular location is the chromosome. It localises to the telomere. Core histone-binding subunit that may target chromatin assembly factors, chromatin remodeling factors and histone deacetylases to their histone substrates in a manner that is regulated by nucleosomal DNA. Component of several complexes which regulate chromatin metabolism. This chain is Histone-binding protein RBBP4 (rbbp4), found in Xenopus tropicalis (Western clawed frog).